The chain runs to 347 residues: NADH-ubiquinone oxidoreductase chain 2 (347 aa).

10 helical membrane-spanning segments follow: residues 13–33 (IILGTMIVMTSSHWLLVWIGF), 59–79 (YFLTQATASMLLMLAVVTNLL), 96–116 (AVMTLALVMKLGLSPFHFWVP), 122–142 (IPLSSGLVLLTWQKLAPLSVL), 149–169 (VSPTLLLTVSLMSIAVGGWGG), 178–198 (ILAYSSIAHMGWMTAVLAYNP), 201–221 (TLLNLTLYILMTTTTFLLFMF), 247–267 (IMLSLGGLPPLTGFLPKWMII), 274–294 (ESLLLPTLMAMMALLSLYFYM), and 323–343 (VPLLPPMITLFTLALPLAPAL).

It belongs to the complex I subunit 2 family. As to quaternary structure, core subunit of respiratory chain NADH dehydrogenase (Complex I) which is composed of 45 different subunits. Interacts with TMEM242.

Its subcellular location is the mitochondrion inner membrane. The catalysed reaction is a ubiquinone + NADH + 5 H(+)(in) = a ubiquinol + NAD(+) + 4 H(+)(out). In terms of biological role, core subunit of the mitochondrial membrane respiratory chain NADH dehydrogenase (Complex I) which catalyzes electron transfer from NADH through the respiratory chain, using ubiquinone as an electron acceptor. Essential for the catalytic activity and assembly of complex I. The sequence is that of NADH-ubiquinone oxidoreductase chain 2 from Megaderma spasma (Lesser false vampire bat).